Consider the following 95-residue polypeptide: MNVGVCYADADRQLWLRMEMPDDSTVEQAIRYSGILERFPEIDLSVQKVGIFGKLVKLDAPVKEGDRIEIYRPITADPKTVRRRKIASDDDDDDD.

The protein belongs to the UPF0125 (RnfH) family.

In Methylococcus capsulatus (strain ATCC 33009 / NCIMB 11132 / Bath), this protein is Protein RnfH.